The chain runs to 654 residues: tRNA 5-methylaminomethyl-2-thiouridine biosynthesis bifunctional protein MnmC (654 aa).

The interval 1–235 is tRNA (mnm(5)s(2)U34)-methyltransferase; sequence MSDFQHAQLD…KREMLGGTYQ (235 aa). An FAD-dependent cmnm(5)s(2)U34 oxidoreductase region spans residues 261 to 654; the sequence is VGGGLAGCAS…LRDLVRGQRG (394 aa).

In the N-terminal section; belongs to the methyltransferase superfamily. tRNA (mnm(5)s(2)U34)-methyltransferase family. The protein in the C-terminal section; belongs to the DAO family. The cofactor is FAD.

Its subcellular location is the cytoplasm. The enzyme catalyses 5-aminomethyl-2-thiouridine(34) in tRNA + S-adenosyl-L-methionine = 5-methylaminomethyl-2-thiouridine(34) in tRNA + S-adenosyl-L-homocysteine + H(+). Its function is as follows. Catalyzes the last two steps in the biosynthesis of 5-methylaminomethyl-2-thiouridine (mnm(5)s(2)U) at the wobble position (U34) in tRNA. Catalyzes the FAD-dependent demodification of cmnm(5)s(2)U34 to nm(5)s(2)U34, followed by the transfer of a methyl group from S-adenosyl-L-methionine to nm(5)s(2)U34, to form mnm(5)s(2)U34. In Pseudomonas aeruginosa (strain UCBPP-PA14), this protein is tRNA 5-methylaminomethyl-2-thiouridine biosynthesis bifunctional protein MnmC.